Here is a 193-residue protein sequence, read N- to C-terminus: MIGRIAGILLEKNPPHLLVDCNGVGYEIDVPMSTFYNLPQNGERVVLLTQQIVREDANLLYGFLTPQERTTFRELLKITGIGARMALAVLSGMSVQELAQAVTMQDAARLTRLPGIGKKTAERLLLELKGKLGADLGELAGAASPSDHATDILNALLALGYSEKEGLAAIKNVPAGTGVSEGIKLALKALSKV.

Residues 1-64 are domain I; it reads MIGRIAGILL…EDANLLYGFL (64 aa). Residues 65–139 are domain II; the sequence is TPQERTTFRE…GKLGADLGEL (75 aa). The interval 139–143 is flexible linker; it reads LAGAA. Positions 144 to 193 are domain III; it reads SPSDHATDILNALLALGYSEKEGLAAIKNVPAGTGVSEGIKLALKALSKV.

The protein belongs to the RuvA family. As to quaternary structure, homotetramer. Forms an RuvA(8)-RuvB(12)-Holliday junction (HJ) complex. HJ DNA is sandwiched between 2 RuvA tetramers; dsDNA enters through RuvA and exits via RuvB. An RuvB hexamer assembles on each DNA strand where it exits the tetramer. Each RuvB hexamer is contacted by two RuvA subunits (via domain III) on 2 adjacent RuvB subunits; this complex drives branch migration. In the full resolvosome a probable DNA-RuvA(4)-RuvB(12)-RuvC(2) complex forms which resolves the HJ.

It localises to the cytoplasm. In terms of biological role, the RuvA-RuvB-RuvC complex processes Holliday junction (HJ) DNA during genetic recombination and DNA repair, while the RuvA-RuvB complex plays an important role in the rescue of blocked DNA replication forks via replication fork reversal (RFR). RuvA specifically binds to HJ cruciform DNA, conferring on it an open structure. The RuvB hexamer acts as an ATP-dependent pump, pulling dsDNA into and through the RuvAB complex. HJ branch migration allows RuvC to scan DNA until it finds its consensus sequence, where it cleaves and resolves the cruciform DNA. The protein is Holliday junction branch migration complex subunit RuvA of Burkholderia lata (strain ATCC 17760 / DSM 23089 / LMG 22485 / NCIMB 9086 / R18194 / 383).